Consider the following 21-residue polypeptide: Nucleoside diphosphate kinase (21 aa).

The active-site Pros-phosphohistidine intermediate is His-4.

It belongs to the NDK family. In terms of assembly, homohexamer. Mg(2+) is required as a cofactor.

It localises to the cytoplasm. The enzyme catalyses a 2'-deoxyribonucleoside 5'-diphosphate + ATP = a 2'-deoxyribonucleoside 5'-triphosphate + ADP. The catalysed reaction is a ribonucleoside 5'-diphosphate + ATP = a ribonucleoside 5'-triphosphate + ADP. In terms of biological role, major role in the synthesis of nucleoside triphosphates other than ATP. The ATP gamma phosphate is transferred to the NDP beta phosphate via a ping-pong mechanism, using a phosphorylated active-site intermediate. In Candida albicans (Yeast), this protein is Nucleoside diphosphate kinase (NDK1).